A 75-amino-acid chain; its full sequence is uncharacterized protein (75 aa).

This is an uncharacterized protein from Acidianus filamentous virus 1 (isolate United States/Yellowstone) (AFV-1).